Consider the following 669-residue polypeptide: DNA mismatch repair protein MutL (669 aa).

The disordered stretch occupies residues 356–382 (FEQRQNTENNQEKTFSSEESNSKPFME). A compositionally biased stretch (polar residues) spans 361–378 (NTENNQEKTFSSEESNSK).

The protein belongs to the DNA mismatch repair MutL/HexB family.

Its function is as follows. This protein is involved in the repair of mismatches in DNA. It is required for dam-dependent methyl-directed DNA mismatch repair. May act as a 'molecular matchmaker', a protein that promotes the formation of a stable complex between two or more DNA-binding proteins in an ATP-dependent manner without itself being part of a final effector complex. This is DNA mismatch repair protein MutL from Staphylococcus aureus (strain USA300).